A 275-amino-acid polypeptide reads, in one-letter code: 2,3,4,5-tetrahydropyridine-2,6-dicarboxylate N-succinyltransferase (275 aa).

Belongs to the transferase hexapeptide repeat family.

It localises to the cytoplasm. It catalyses the reaction (S)-2,3,4,5-tetrahydrodipicolinate + succinyl-CoA + H2O = (S)-2-succinylamino-6-oxoheptanedioate + CoA. It functions in the pathway amino-acid biosynthesis; L-lysine biosynthesis via DAP pathway; LL-2,6-diaminopimelate from (S)-tetrahydrodipicolinate (succinylase route): step 1/3. The protein is 2,3,4,5-tetrahydropyridine-2,6-dicarboxylate N-succinyltransferase of Burkholderia ambifaria (strain MC40-6).